The sequence spans 452 residues: Digeranylgeranylglycerophospholipid reductase (452 aa).

FAD is bound by residues 15 to 16, 35 to 36, and 45 to 50; these read FA, DS, and KPCGDA. A 2,3-bis-O-phytanyl-sn-glycerol 1-phospholipid is bound at residue histidine 55. Positions 122 and 288 each coordinate FAD. Histidine 297 is a binding site for a 2,3-bis-O-phytanyl-sn-glycerol 1-phospholipid. 300–301 contributes to the FAD binding site; the sequence is GK. A disulfide bond links cysteine 310 and cysteine 335. Tyrosine 340 lines the a 2,3-bis-O-phytanyl-sn-glycerol 1-phospholipid pocket.

Belongs to the geranylgeranyl reductase family. In terms of assembly, monomer. The cofactor is FAD.

The enzyme catalyses a 2,3-bis-O-phytanyl-sn-glycerol 1-phospholipid + 8 A = a 2,3-bis-O-(geranylgeranyl)-sn-glycerol 1-phospholipid + 8 AH2. It carries out the reaction 2,3-bis-O-(phytanyl)-sn-glycerol 1-phosphate + 8 A = 2,3-bis-O-(geranylgeranyl)-sn-glycerol 1-phosphate + 8 AH2. The catalysed reaction is sn-3-O-phytanylglycerol 1-phosphate + 4 A = sn-3-O-(geranylgeranyl)glycerol 1-phosphate + 4 AH2. It catalyses the reaction phytyl diphosphate + 3 A = (2E,6E,10E)-geranylgeranyl diphosphate + 3 AH2. Its pathway is membrane lipid metabolism; glycerophospholipid metabolism. In terms of biological role, is involved in the reduction of 2,3-digeranylgeranylglycerophospholipids (unsaturated archaeols) into 2,3-diphytanylglycerophospholipids (saturated archaeols) in the biosynthesis of archaeal membrane lipids. Catalyzes the formation of archaetidic acid (2,3-di-O-phytanyl-sn-glyceryl phosphate) from 2,3-di-O-geranylgeranylglyceryl phosphate (DGGGP) via the hydrogenation of each double bond of the isoprenoid chains. Is not active with NADPH or NADH as an electron donor; the physiological reducing agent is unknown. Is also active on the more upstream precursors of membrane lipid biosynthesis, catalyzing the complete reduction of 3-O-geranylgeranylglyceryl phosphate (GGGP) to 3-O-phytanylglyceryl phosphate, and the partial reduction of geranylgeranyl diphosphate (GGPP) to phytyl diphosphate, thus reducing three of four GGPP double bonds and preserving the allylic double bond (at position 2). This reaction product is a reactive prenyl donor, which can be used as a substrate by archaeal prenyltransferases such as GGGP synthases. In Sulfolobus acidocaldarius (strain ATCC 33909 / DSM 639 / JCM 8929 / NBRC 15157 / NCIMB 11770), this protein is Digeranylgeranylglycerophospholipid reductase.